Reading from the N-terminus, the 458-residue chain is Exodeoxyribonuclease 7 large subunit (458 aa).

It belongs to the XseA family. Heterooligomer composed of large and small subunits.

It is found in the cytoplasm. It catalyses the reaction Exonucleolytic cleavage in either 5'- to 3'- or 3'- to 5'-direction to yield nucleoside 5'-phosphates.. Its function is as follows. Bidirectionally degrades single-stranded DNA into large acid-insoluble oligonucleotides, which are then degraded further into small acid-soluble oligonucleotides. The chain is Exodeoxyribonuclease 7 large subunit from Sodalis glossinidius (strain morsitans).